Reading from the N-terminus, the 130-residue chain is Ribosome-binding factor A (130 aa).

It belongs to the RbfA family. Monomer. Binds 30S ribosomal subunits, but not 50S ribosomal subunits or 70S ribosomes.

The protein localises to the cytoplasm. Functionally, one of several proteins that assist in the late maturation steps of the functional core of the 30S ribosomal subunit. Associates with free 30S ribosomal subunits (but not with 30S subunits that are part of 70S ribosomes or polysomes). Required for efficient processing of 16S rRNA. May interact with the 5'-terminal helix region of 16S rRNA. The polypeptide is Ribosome-binding factor A (Prochlorococcus marinus (strain SARG / CCMP1375 / SS120)).